The primary structure comprises 151 residues: UPF0178 protein Ping_0754 (151 aa).

The protein belongs to the UPF0178 family.

The chain is UPF0178 protein Ping_0754 from Psychromonas ingrahamii (strain DSM 17664 / CCUG 51855 / 37).